Here is a 216-residue protein sequence, read N- to C-terminus: Cytochrome c biogenesis ATP-binding export protein CcmA (216 aa).

The region spanning 5–216 (ISVDTLLSAS…RKIRLDYRFV (212 aa)) is the ABC transporter domain. 43 to 50 (GPNGAGKT) serves as a coordination point for ATP.

The protein belongs to the ABC transporter superfamily. CcmA exporter (TC 3.A.1.107) family. The complex is composed of two ATP-binding proteins (CcmA) and two transmembrane proteins (CcmB).

The protein resides in the cell inner membrane. It carries out the reaction heme b(in) + ATP + H2O = heme b(out) + ADP + phosphate + H(+). Part of the ABC transporter complex CcmAB involved in the biogenesis of c-type cytochromes; once thought to export heme, this seems not to be the case, but its exact role is uncertain. Responsible for energy coupling to the transport system. This is Cytochrome c biogenesis ATP-binding export protein CcmA from Shewanella oneidensis (strain ATCC 700550 / JCM 31522 / CIP 106686 / LMG 19005 / NCIMB 14063 / MR-1).